Reading from the N-terminus, the 547-residue chain is Chaperonin GroEL 1 (547 aa).

ATP-binding positions include 30–33 (TLGP), Lys-51, 87–91 (DGTTT), Gly-415, and Asp-495.

Belongs to the chaperonin (HSP60) family. As to quaternary structure, forms a cylinder of 14 subunits composed of two heptameric rings stacked back-to-back. Interacts with the co-chaperonin GroES.

It is found in the cytoplasm. It catalyses the reaction ATP + H2O + a folded polypeptide = ADP + phosphate + an unfolded polypeptide.. Together with its co-chaperonin GroES, plays an essential role in assisting protein folding. The GroEL-GroES system forms a nano-cage that allows encapsulation of the non-native substrate proteins and provides a physical environment optimized to promote and accelerate protein folding. In Azorhizobium caulinodans (strain ATCC 43989 / DSM 5975 / JCM 20966 / LMG 6465 / NBRC 14845 / NCIMB 13405 / ORS 571), this protein is Chaperonin GroEL 1.